A 101-amino-acid polypeptide reads, in one-letter code: NADH-ubiquinone oxidoreductase chain 5 (101 aa).

3 consecutive transmembrane segments (helical) span residues 12–32 (IALF…SGVI), 48–68 (FLFI…FICF), and 79–99 (LVIY…LFII).

Belongs to the complex I subunit 5 family.

The protein localises to the mitochondrion inner membrane. It catalyses the reaction a ubiquinone + NADH + 5 H(+)(in) = a ubiquinol + NAD(+) + 4 H(+)(out). Its function is as follows. Core subunit of the mitochondrial membrane respiratory chain NADH dehydrogenase (Complex I) that is believed to belong to the minimal assembly required for catalysis. Complex I functions in the transfer of electrons from NADH to the respiratory chain. The immediate electron acceptor for the enzyme is believed to be ubiquinone. This chain is NADH-ubiquinone oxidoreductase chain 5 (ND5), found in Leishmania tarentolae (Sauroleishmania tarentolae).